The sequence spans 380 residues: Cystathionine beta-lyase (380 aa).

An N6-(pyridoxal phosphate)lysine modification is found at Lys196.

Belongs to the trans-sulfuration enzymes family. Requires pyridoxal 5'-phosphate as cofactor.

The protein resides in the cytoplasm. It catalyses the reaction L,L-cystathionine + H2O = L-homocysteine + pyruvate + NH4(+). The enzyme catalyses an S-substituted L-cysteine + H2O = a thiol + pyruvate + NH4(+). It functions in the pathway amino-acid biosynthesis; L-methionine biosynthesis via de novo pathway; L-homocysteine from L-cystathionine: step 1/1. The enzymatic degradation of amino acids in cheese is believed to generate aroma compounds and therefore to be essential for flavor development. Cystathionine beta-lyase (CBL) can convert cystathionine to homocysteine but is also able to catalyze an alpha, gamma elimination. With methionine as a substrate, it produces volatile sulfur compounds which are important for flavor formation in Gouda cheese. This is Cystathionine beta-lyase (metC) from Lactococcus lactis subsp. cremoris (Streptococcus cremoris).